Here is a 258-residue protein sequence, read N- to C-terminus: Transcription factor RSL3 (258 aa).

Positions 98–105 (RKLLDVEN) match the D-box motif. Residues 119-178 (ELAKSKKKQRVSSESNTVDESNTNWVDGQSLSNSSDDEKASVTSVKGKTRATKGTATDPQ) are disordered. Positions 130-152 (SSESNTVDESNTNWVDGQSLSNS) are enriched in polar residues. The basic motif stretch occupies residues 173–186 (TATDPQSLYARKRR). Positions 173-222 (TATDPQSLYARKRREKINERLKTLQNLVPNGTKVDISTMLEEAVHYVKFL) constitute a bHLH domain. Positions 187 to 222 (EKINERLKTLQNLVPNGTKVDISTMLEEAVHYVKFL) are helix-loop-helix motif.

In terms of assembly, homodimer. In terms of processing, ubiquitinated. Ubiquitination leads to its subsequent degradation by the 26S proteasome. In terms of tissue distribution, expressed constitutively in roots, leaves, and flowers. Expressed in root epidermal hair cells.

The protein localises to the nucleus. Functionally, transcription factor involved in the regulation of root hair elongation. Is sufficient to promote postmitotic cell growth in root-hair cells and is a direct transcriptional target of RHD6 and RSL1. Involved in the regulation of root hair elongation in response to low phosphate. Controls root hair cell growth by regulating the expression of genes encoding proteins involved in cell signaling, cell wall modification and secretion. The polypeptide is Transcription factor RSL3 (Arabidopsis thaliana (Mouse-ear cress)).